The following is a 363-amino-acid chain: Transcription factor PIF6 (363 aa).

2 disordered regions span residues 154 to 204 (SEGS…RNDI) and 340 to 363 (IPNPNSLSNLDGATLHKKSRKTNR). Residues 178–188 (RTRKALVKRKR) are compositionally biased toward basic residues. The 50-residue stretch at 188-237 (RNAEAYNSPERNQRNDINKKMRTLQNLLPNSHKDDNESMLDEAINYMTNL) folds into the bHLH domain. Residues 340 to 350 (IPNPNSLSNLD) show a composition bias toward polar residues. Basic residues predominate over residues 354–363 (LHKKSRKTNR).

As to quaternary structure, homodimer. Interacts with APRR1/TOC1. Binds to RGL2 and RGA. Associates to PTAC12/HMR/PAP5 which acts as a transcriptional coactivator. In terms of tissue distribution, mainly expressed in fruits and flowers and, to a lower extent, in leaves, stems, seedlings and roots.

Its subcellular location is the nucleus. In terms of biological role, transcription factor. The polypeptide is Transcription factor PIF6 (Arabidopsis thaliana (Mouse-ear cress)).